Here is a 324-residue protein sequence, read N- to C-terminus: Bis(5'-nucleosyl)-tetraphosphatase, symmetrical (324 aa).

The tract at residues 269-324 is disordered; it reads PGREVTAPATAPRAPRRPRERQGRQRARGGRGGGNGNGNGGNAAAPAAAPGDAPQE. A compositionally biased stretch (basic residues) spans 282–297; it reads APRRPRERQGRQRARG. Over residues 298–309 the composition is skewed to gly residues; that stretch reads GRGGGNGNGNGG. Residues 310–324 are compositionally biased toward low complexity; sequence NAAAPAAAPGDAPQE.

Belongs to the Ap4A hydrolase family.

The enzyme catalyses P(1),P(4)-bis(5'-adenosyl) tetraphosphate + H2O = 2 ADP + 2 H(+). Functionally, hydrolyzes diadenosine 5',5'''-P1,P4-tetraphosphate to yield ADP. This Xanthomonas campestris pv. campestris (strain ATCC 33913 / DSM 3586 / NCPPB 528 / LMG 568 / P 25) protein is Bis(5'-nucleosyl)-tetraphosphatase, symmetrical.